The following is a 431-amino-acid chain: uncharacterized protein (431 aa).

A Peptidase S8 domain is found at 1-258; sequence MPSQMREAIT…HGLIDLERAG (258 aa).

The protein belongs to the peptidase S8 family.

This is an uncharacterized protein from Sinorhizobium fredii (strain NBRC 101917 / NGR234).